A 254-amino-acid chain; its full sequence is Thiazole synthase (254 aa).

The Schiff-base intermediate with DXP role is filled by K95. 1-deoxy-D-xylulose 5-phosphate-binding positions include G156, 182–183, and 204–205; these read AG and NT.

Belongs to the ThiG family. In terms of assembly, homotetramer. Forms heterodimers with either ThiH or ThiS.

It localises to the cytoplasm. The enzyme catalyses [ThiS sulfur-carrier protein]-C-terminal-Gly-aminoethanethioate + 2-iminoacetate + 1-deoxy-D-xylulose 5-phosphate = [ThiS sulfur-carrier protein]-C-terminal Gly-Gly + 2-[(2R,5Z)-2-carboxy-4-methylthiazol-5(2H)-ylidene]ethyl phosphate + 2 H2O + H(+). It participates in cofactor biosynthesis; thiamine diphosphate biosynthesis. In terms of biological role, catalyzes the rearrangement of 1-deoxy-D-xylulose 5-phosphate (DXP) to produce the thiazole phosphate moiety of thiamine. Sulfur is provided by the thiocarboxylate moiety of the carrier protein ThiS. In vitro, sulfur can be provided by H(2)S. The protein is Thiazole synthase of Shewanella sp. (strain W3-18-1).